A 345-amino-acid chain; its full sequence is Transmembrane protein 144 homolog (345 aa).

Transmembrane regions (helical) follow at residues 3–23, 32–52, 61–81, 84–104, 120–140, 193–213, 233–253, 265–285, 293–313, and 324–344; these read IAVGLSACALSSVLFGSMFVP, GIFVQWIMSTAILLVGIVVYS, PLAMLGGMFWALGNATAVPIM, IGIGMGMLVWGTTNCVAGWAA, PFLNYFGLVLVVFGGFLFSQI, LAIITSLVAGVFYGFTFVPVI, VFSHYIGIFCTASALMIGYVI, LVGPSMTAGSMWGIAQASWFV, AVSFPIISMVPGVIAALWSVF, and LRLLSIAVAITLIGAICVGVS.

This sequence belongs to the TMEM144 family.

It localises to the membrane. The protein is Transmembrane protein 144 homolog of Caenorhabditis elegans.